Reading from the N-terminus, the 420-residue chain is Putative polyketide beta-ketoacyl synthase 1 (420 aa).

The Ketosynthase family 3 (KS3) domain maps to Gln-3–Ser-414. Catalysis depends on for beta-ketoacyl synthase activity residues Cys-169, His-307, and His-344.

Belongs to the thiolase-like superfamily. Beta-ketoacyl-ACP synthases family.

It functions in the pathway antifungal biosynthesis; monensin biosynthesis. This Streptomyces virginiae (Streptomyces cinnamonensis) protein is Putative polyketide beta-ketoacyl synthase 1.